The sequence spans 1021 residues: Translation initiation factor IF-2 (1021 aa).

A disordered region spans residues 50–422 (AFPAEGGSAS…RMGAMVPRGN (373 aa)). The segment covering 57–71 (SASGGRPGGRPGPGN) has biased composition (gly residues). Pro residues predominate over residues 75 to 95 (PAPPRPGLAPRPGPRPVPGRP). A compositionally biased stretch (low complexity) spans 96–112 (GPAARPGGPAAPSAPAA). A compositionally biased stretch (pro residues) spans 113–129 (PSAPAPGAPAASPPASQ). 3 stretches are compositionally biased toward low complexity: residues 130–159 (PRPI…ASGP), 167–178 (GGPAAPGRARPG), and 187–196 (SAPSAPSAGG). Residues 198 to 208 (RPGPRPGPRPS) are compositionally biased toward pro residues. Low complexity predominate over residues 219-233 (SAGPRQSAGQSGSGP). Pro residues-rich tracts occupy residues 234–254 (ASPP…PRPG) and 262–273 (RPSPGSMPPRPG). Composition is skewed to gly residues over residues 275-291 (RPGG…GSGG) and 306-389 (GAPG…GGRG). The span at 390-401 (RPGRQRKSKRAK) shows a compositional bias: basic residues. A tr-type G domain is found at 514 to 686 (IRPPVVTVMG…IILTADASLD (173 aa)). The interval 523–530 (GHVDHGKT) is G1. 523 to 530 (GHVDHGKT) is a GTP binding site. The interval 548–552 (GITQH) is G2. The segment at 573–576 (DTPG) is G3. GTP-binding positions include 573–577 (DTPGH) and 627–630 (NKVD). The tract at residues 627 to 630 (NKVD) is G4. Positions 663 to 665 (SAR) are G5.

The protein belongs to the TRAFAC class translation factor GTPase superfamily. Classic translation factor GTPase family. IF-2 subfamily.

The protein resides in the cytoplasm. In terms of biological role, one of the essential components for the initiation of protein synthesis. Protects formylmethionyl-tRNA from spontaneous hydrolysis and promotes its binding to the 30S ribosomal subunits. Also involved in the hydrolysis of GTP during the formation of the 70S ribosomal complex. This Frankia alni (strain DSM 45986 / CECT 9034 / ACN14a) protein is Translation initiation factor IF-2.